A 950-amino-acid chain; its full sequence is Valine--tRNA ligase (950 aa).

Positions 40-50 match the 'HIGH' region motif; that stretch reads PNVTGSLHMGH. The short motif at 551 to 555 is the 'KMSKS' region element; it reads KMSKS. Residue lysine 554 coordinates ATP. Residues 881–950 are a coiled coil; sequence LIDKSAELGR…AEQRQKIAAL (70 aa).

The protein belongs to the class-I aminoacyl-tRNA synthetase family. ValS type 1 subfamily. In terms of assembly, monomer.

The protein localises to the cytoplasm. It carries out the reaction tRNA(Val) + L-valine + ATP = L-valyl-tRNA(Val) + AMP + diphosphate. In terms of biological role, catalyzes the attachment of valine to tRNA(Val). As ValRS can inadvertently accommodate and process structurally similar amino acids such as threonine, to avoid such errors, it has a 'posttransfer' editing activity that hydrolyzes mischarged Thr-tRNA(Val) in a tRNA-dependent manner. This Pseudomonas aeruginosa (strain ATCC 15692 / DSM 22644 / CIP 104116 / JCM 14847 / LMG 12228 / 1C / PRS 101 / PAO1) protein is Valine--tRNA ligase.